A 282-amino-acid polypeptide reads, in one-letter code: Undecaprenyl-diphosphatase (282 aa).

The next 5 helical transmembrane spans lie at 96-116, 123-143, 198-218, 229-249, and 260-280; these read WMVIVGTLPVSIVGLLAKDII, MWITASVLIAFSFVFIAAEKW, FLLAIPAVLASGLFSLPDAFA, QLAVGTGIAFALGYASIAWLL, and FAAYRIPVGLLVMALLATGML.

The protein belongs to the UppP family.

It is found in the cell membrane. It catalyses the reaction di-trans,octa-cis-undecaprenyl diphosphate + H2O = di-trans,octa-cis-undecaprenyl phosphate + phosphate + H(+). Its function is as follows. Catalyzes the dephosphorylation of undecaprenyl diphosphate (UPP). Confers resistance to bacitracin. This chain is Undecaprenyl-diphosphatase, found in Corynebacterium diphtheriae (strain ATCC 700971 / NCTC 13129 / Biotype gravis).